An 89-amino-acid chain; its full sequence is MSITPERKQTLVKEYAQKSGDTGSPEVQVAILTERIVNLTEHFKTHVKDNHSRRGLLKMVSQRRQLLDYVKNRDEPRYKSLIERLGIRR.

Belongs to the universal ribosomal protein uS15 family. As to quaternary structure, part of the 30S ribosomal subunit. Forms a bridge to the 50S subunit in the 70S ribosome, contacting the 23S rRNA.

One of the primary rRNA binding proteins, it binds directly to 16S rRNA where it helps nucleate assembly of the platform of the 30S subunit by binding and bridging several RNA helices of the 16S rRNA. Its function is as follows. Forms an intersubunit bridge (bridge B4) with the 23S rRNA of the 50S subunit in the ribosome. This is Small ribosomal subunit protein uS15 from Methylocella silvestris (strain DSM 15510 / CIP 108128 / LMG 27833 / NCIMB 13906 / BL2).